A 51-amino-acid chain; its full sequence is Cytochrome bd ubiquinol oxidase subunit X (51 aa).

Residues 1–3 (MWY) are Cytoplasmic-facing. The chain crosses the membrane as a helical span at residues 4-26 (FSWLLGLPLAAAFAVLNAMWYEL). Topologically, residues 27–51 (MDDRARKRLAADPTAELALEGNKHH) are periplasmic.

It belongs to the cytochrome ubiquinol oxidase subunit X family. May be a subunit of cytochrome ubiquinol oxidase.

It is found in the cell inner membrane. It catalyses the reaction 2 a ubiquinol + O2(in) + 4 H(+)(in) = 2 a ubiquinone + 2 H2O(in) + 4 H(+)(out). It functions in the pathway energy metabolism; oxidative phosphorylation. Its function is as follows. Required for correct functioning of cytochrome bd oxidase. The chain is Cytochrome bd ubiquinol oxidase subunit X (cydX) from Brucella abortus (strain 2308).